A 409-amino-acid polypeptide reads, in one-letter code: 2-methylfumaryl-CoA isomerase (409 aa).

Aspartate 165 (nucleophile) is an active-site residue.

The protein belongs to the CoA-transferase III family. Mesaconyl-CoA isomerase subfamily. In terms of assembly, homodimer.

It carries out the reaction 2-methylfumaryl-CoA = 3-methylfumaryl-CoA. Partially inhibited by hydroxylamine. Its function is as follows. Involved in the glyoxylate assimilation cycle used to regenerate acetyl-CoA and produce pyruvate as universal precursor for biosynthesis. This reaction involves an intramolecular CoA transferase that catalyzes the reversible transfer of the CoA moiety from the C1-carboxyl group of mesaconyl-CoA to the C4-carboxyl group. It does not require free mesaconate as CoA acceptor. The polypeptide is 2-methylfumaryl-CoA isomerase (mct) (Chloroflexus aurantiacus (strain ATCC 29366 / DSM 635 / J-10-fl)).